Reading from the N-terminus, the 284-residue chain is Phosphatidylglycerol--prolipoprotein diacylglyceryl transferase (284 aa).

The next 7 membrane-spanning stretches (helical) occupy residues 14–34, 62–82, 106–126, 136–156, 190–210, 218–238, and 252–272; these read IAFSLGSIEVHWYGLAYACAI, YFLWAELGIVLGARVGYILIY, FVGIRGMSYHGGLVGFLIASY, LLIYLDLIAISLPLGYVFGRI, PSQLIEAFLEGVIVFLMVLWA, GLLIVVYGLGYSLMRFIAEFY, and LSMGQILSLLMVIVSLGILLY. Residue Arg-155 participates in a 1,2-diacyl-sn-glycero-3-phospho-(1'-sn-glycerol) binding.

The protein belongs to the Lgt family.

The protein localises to the cell inner membrane. It catalyses the reaction L-cysteinyl-[prolipoprotein] + a 1,2-diacyl-sn-glycero-3-phospho-(1'-sn-glycerol) = an S-1,2-diacyl-sn-glyceryl-L-cysteinyl-[prolipoprotein] + sn-glycerol 1-phosphate + H(+). The protein operates within protein modification; lipoprotein biosynthesis (diacylglyceryl transfer). Catalyzes the transfer of the diacylglyceryl group from phosphatidylglycerol to the sulfhydryl group of the N-terminal cysteine of a prolipoprotein, the first step in the formation of mature lipoproteins. This is Phosphatidylglycerol--prolipoprotein diacylglyceryl transferase from Helicobacter pylori (strain Shi470).